Here is a 406-residue protein sequence, read N- to C-terminus: Probable tRNA sulfurtransferase (406 aa).

Residues 62-167 (AEVSNRLTKV…QDATYLSFED (106 aa)) form the THUMP domain. Residues 185 to 186 (ML), 210 to 211 (HF), Arg-267, Gly-289, and Gln-298 each bind ATP.

Belongs to the ThiI family.

It is found in the cytoplasm. It carries out the reaction [ThiI sulfur-carrier protein]-S-sulfanyl-L-cysteine + a uridine in tRNA + 2 reduced [2Fe-2S]-[ferredoxin] + ATP + H(+) = [ThiI sulfur-carrier protein]-L-cysteine + a 4-thiouridine in tRNA + 2 oxidized [2Fe-2S]-[ferredoxin] + AMP + diphosphate. The enzyme catalyses [ThiS sulfur-carrier protein]-C-terminal Gly-Gly-AMP + S-sulfanyl-L-cysteinyl-[cysteine desulfurase] + AH2 = [ThiS sulfur-carrier protein]-C-terminal-Gly-aminoethanethioate + L-cysteinyl-[cysteine desulfurase] + A + AMP + 2 H(+). It functions in the pathway cofactor biosynthesis; thiamine diphosphate biosynthesis. Functionally, catalyzes the ATP-dependent transfer of a sulfur to tRNA to produce 4-thiouridine in position 8 of tRNAs, which functions as a near-UV photosensor. Also catalyzes the transfer of sulfur to the sulfur carrier protein ThiS, forming ThiS-thiocarboxylate. This is a step in the synthesis of thiazole, in the thiamine biosynthesis pathway. The sulfur is donated as persulfide by IscS. The chain is Probable tRNA sulfurtransferase from Lactococcus lactis subsp. cremoris (strain MG1363).